The following is a 178-amino-acid chain: Nucleoside-triphosphatase THEP1 (178 aa).

Residues 9–16 (GPVGSIKA) and 101–108 (VIIIDEVG) each bind ATP.

Belongs to the THEP1 NTPase family.

It carries out the reaction a ribonucleoside 5'-triphosphate + H2O = a ribonucleoside 5'-diphosphate + phosphate + H(+). Its function is as follows. Has nucleotide phosphatase activity towards ATP, GTP, CTP, TTP and UTP. May hydrolyze nucleoside diphosphates with lower efficiency. The sequence is that of Nucleoside-triphosphatase THEP1 from Thermoplasma volcanium (strain ATCC 51530 / DSM 4299 / JCM 9571 / NBRC 15438 / GSS1).